A 488-amino-acid polypeptide reads, in one-letter code: Pup--protein ligase (488 aa).

Position 34 (Glu-34) interacts with Mg(2+). Position 77 (Arg-77) interacts with ATP. Tyr-79 contributes to the Mg(2+) binding site. Asp-81 acts as the Proton acceptor in catalysis. Glu-87 lines the Mg(2+) pocket. ATP-binding residues include Thr-90 and Trp-453.

It belongs to the Pup ligase/Pup deamidase family. Pup-conjugating enzyme subfamily.

It catalyses the reaction ATP + [prokaryotic ubiquitin-like protein]-L-glutamate + [protein]-L-lysine = ADP + phosphate + N(6)-([prokaryotic ubiquitin-like protein]-gamma-L-glutamyl)-[protein]-L-lysine.. Its pathway is protein degradation; proteasomal Pup-dependent pathway. It participates in protein modification; protein pupylation. Its function is as follows. Catalyzes the covalent attachment of the prokaryotic ubiquitin-like protein modifier Pup to the proteasomal substrate proteins, thereby targeting them for proteasomal degradation. This tagging system is termed pupylation. The ligation reaction involves the side-chain carboxylate of the C-terminal glutamate of Pup and the side-chain amino group of a substrate lysine. This is Pup--protein ligase from Bifidobacterium dentium (strain ATCC 27534 / DSM 20436 / JCM 1195 / Bd1).